The sequence spans 387 residues: Succinate--CoA ligase [ADP-forming] subunit beta (387 aa).

In terms of domain architecture, ATP-grasp spans 9-245 (KDLLESYGLK…KSQENAKELK (237 aa)). Residues Lys-46, 53–55 (GRG), Glu-100, Tyr-103, and Glu-108 contribute to the ATP site. Positions 200 and 214 each coordinate Mg(2+). Residues Asn-265 and 322–324 (GIV) contribute to the substrate site.

Belongs to the succinate/malate CoA ligase beta subunit family. In terms of assembly, heterotetramer of two alpha and two beta subunits. Mg(2+) serves as cofactor.

The catalysed reaction is succinate + ATP + CoA = succinyl-CoA + ADP + phosphate. It catalyses the reaction GTP + succinate + CoA = succinyl-CoA + GDP + phosphate. The protein operates within carbohydrate metabolism; tricarboxylic acid cycle; succinate from succinyl-CoA (ligase route): step 1/1. Succinyl-CoA synthetase functions in the citric acid cycle (TCA), coupling the hydrolysis of succinyl-CoA to the synthesis of either ATP or GTP and thus represents the only step of substrate-level phosphorylation in the TCA. The beta subunit provides nucleotide specificity of the enzyme and binds the substrate succinate, while the binding sites for coenzyme A and phosphate are found in the alpha subunit. The chain is Succinate--CoA ligase [ADP-forming] subunit beta from Francisella tularensis subsp. tularensis (strain FSC 198).